A 213-amino-acid polypeptide reads, in one-letter code: 3-demethoxyubiquinol 3-hydroxylase (213 aa).

Positions 62, 92, 95, 144, 176, and 179 each coordinate Fe cation.

This sequence belongs to the COQ7 family. Fe cation serves as cofactor.

The protein localises to the cell membrane. The enzyme catalyses a 5-methoxy-2-methyl-3-(all-trans-polyprenyl)benzene-1,4-diol + AH2 + O2 = a 3-demethylubiquinol + A + H2O. The protein operates within cofactor biosynthesis; ubiquinone biosynthesis. Catalyzes the hydroxylation of 2-nonaprenyl-3-methyl-6-methoxy-1,4-benzoquinol during ubiquinone biosynthesis. The sequence is that of 3-demethoxyubiquinol 3-hydroxylase from Chromohalobacter salexigens (strain ATCC BAA-138 / DSM 3043 / CIP 106854 / NCIMB 13768 / 1H11).